The primary structure comprises 268 residues: Myb-related protein 315 (268 aa).

HTH myb-type domains lie at 9–61 (KFGL…MNYL) and 62–116 (RPDL…KKKL). 2 consecutive DNA-binding regions (H-T-H motif) follow at residues 37–61 (WRVIPKLAGLSRCGKSCRLRWMNYL) and 89–112 (WSKIALHIPGRTDNEIKNYWNTHI).

In terms of tissue distribution, expressed in roots, stems, leaves, seed pods and flowers. Strongest expression in the stem.

It is found in the nucleus. Transcription factor. The sequence is that of Myb-related protein 315 from Antirrhinum majus (Garden snapdragon).